Reading from the N-terminus, the 218-residue chain is rRNA methyltransferase 2, mitochondrial (218 aa).

S-adenosyl-L-methionine is bound by residues 59-62 (PGSW), Asp80, 96-97 (DI), and Asp133. The active-site Proton acceptor is Lys173.

This sequence belongs to the class I-like SAM-binding methyltransferase superfamily. RNA methyltransferase RlmE family.

The protein resides in the mitochondrion. The catalysed reaction is a uridine in 21S rRNA + S-adenosyl-L-methionine = a 2'-O-methyluridine in 21S rRNA + S-adenosyl-L-homocysteine + H(+). S-adenosyl-L-methionine-dependent 2'-O-ribose methyltransferase that catalyzes the formation of the 2'-O-methyluridine corresponding to position 2791 in S.cerevisiae 21S mitochondrial large subunit ribosomal RNA (mtLSU rRNA), a universally conserved modification in the peptidyl transferase domain of the mtLSU rRNA. The protein is rRNA methyltransferase 2, mitochondrial of Schizosaccharomyces pombe (strain 972 / ATCC 24843) (Fission yeast).